A 341-amino-acid polypeptide reads, in one-letter code: D-aspartate oxidase (341 aa).

Aspartate 36, lysine 37, threonine 43, serine 44, methionine 50, glycine 307, isoleucine 311, and serine 312 together coordinate FAD. Residues 339 to 341 (SNL) carry the Microbody targeting signal motif.

This sequence belongs to the DAMOX/DASOX family. As to quaternary structure, monomer. Interacts with PEX5; the interaction is direct and required for localization of DDO to the peroxisome. Interacts with DAOA; the interaction is direct and increases the degradation rate of DDO. It depends on FAD as a cofactor. Post-translationally, may be S-nitrosylated. Expressed in epithelial cells of the proximal nephron tubules in the renal cortex (at protein level). In the brain, expressed in the frontal, temporal, and occipital lobes of the cortex, hippocampus, striatum, diencephalon, brainstem, cerebellum, spinal cord, plexus choroiderus and ependyma (at protein level). Expression is increased in the prefrontal cortex of schizophrenic patients. Levels are normal in the superior frontal gyrus of patients with Alzheimer's disease.

The protein localises to the peroxisome matrix. It is found in the cytoplasm. It localises to the cytosol. The enzyme catalyses D-aspartate + O2 + H2O = oxaloacetate + H2O2 + NH4(+). It carries out the reaction D-glutamate + O2 + H2O = H2O2 + 2-oxoglutarate + NH4(+). With respect to regulation, inhibited by the benzodiazepine olanzapine. Inhibited by aminooxyacetic acid, thiolactomycin, malonate and meso-tartrate. Clozapine, haloperidol and chlorpromazine have no effect on activity. Not inhibited by sodium, potassium, magnesium, iron, calcium, cobalt, copper, nickel, manganese or zinc ions. Not inhibited by AMP, ADP, ATP, or cAMP. Not inhibited by pyridoxal 5'-phosphate. Functionally, selectively catalyzes the oxidative deamination of acidic amino acids. Suppresses the level of D-aspartate in the brain, an amino acid that can act as an agonist for glutamate receptors. Protects the organism from the toxicity of D-amino acids. May also function in the intestine. The polypeptide is D-aspartate oxidase (DDO) (Homo sapiens (Human)).